The chain runs to 380 residues: 4-hydroxy-tetrahydrodipicolinate synthase, chloroplastic (380 aa).

Positions 1–44 (MISPTNLLPARKITPVSNGGAATASPSSPSVAARPRRLPSGLQS) are disordered. Residues 1–54 (MISPTNLLPARKITPVSNGGAATASPSSPSVAARPRRLPSGLQSVTGRGKVSLA) constitute a chloroplast transit peptide. The span at 21 to 33 (AATASPSSPSVAA) shows a compositional bias: low complexity. Position 123 (Thr123) interacts with pyruvate. Tyr209 acts as the Proton donor/acceptor in catalysis. Residue Lys237 is the Schiff-base intermediate with substrate of the active site. Position 276 (Ile276) interacts with pyruvate.

It belongs to the DapA family. Tetramer of modified subunits derived from two genes in different combinations.

It is found in the plastid. The protein localises to the chloroplast. It catalyses the reaction L-aspartate 4-semialdehyde + pyruvate = (2S,4S)-4-hydroxy-2,3,4,5-tetrahydrodipicolinate + H2O + H(+). Its pathway is amino-acid biosynthesis; L-lysine biosynthesis via DAP pathway; (S)-tetrahydrodipicolinate from L-aspartate: step 3/4. With respect to regulation, sensitive to lysine inhibition. This inhibition increase in an allosteric manner with increasing concentration of the inhibitor. Its function is as follows. Catalyzes the condensation of (S)-aspartate-beta-semialdehyde [(S)-ASA] and pyruvate to 4-hydroxy-tetrahydrodipicolinate (HTPA). The chain is 4-hydroxy-tetrahydrodipicolinate synthase, chloroplastic from Zea mays (Maize).